The sequence spans 360 residues: MLVYLAEYLTQFYSGFNVFSYVTFRAILGLMTALVFCLWWGPKMIRRLQTLQIGQVVRSDGPESHFSKSGTPTMGGILILAGIFISVLLWGDLGSRYVWVVLFVLASFGLIGFIDDYRKVVRKDTKGLIARWKYILQSLAAIIIAFYLYASADTVGETQLVVPFFKDIMPQMGAFFIVLAYFTIVGSSNAVNLTDGLDGLAIMPTVMVAAAFALIAYLSGHVQFANYLHIPYLPGAGELVIVCTAIVGAGLGFLWFNTYPAQVFMGDVGSLALGAALGAIAVLVRQEILLVIMGGVFVMETVSVILQVGSYKLRGQRIFRMAPIHHHYELKGWPEPRVIVRFWIISLFLVMLGLATLKLR.

Helical transmembrane passes span 21 to 41, 74 to 94, 97 to 117, 135 to 155, 168 to 188, 199 to 219, 236 to 256, 263 to 283, 288 to 308, and 338 to 358; these read YVTFRAILGLMTALVFCLWWG, MGGILILAGIFISVLLWGDLG, YVWVVLFVLASFGLIGFIDDY, ILQSLAAIIIAFYLYASADTV, IMPQMGAFFIVLAYFTIVGSS, GLAIMPTVMVAAAFALIAYLS, AGELVIVCTAIVGAGLGFLWF, VFMGDVGSLALGAALGAIAVL, ILLVIMGGVFVMETVSVILQV, and VIVRFWIISLFLVMLGLATLK.

This sequence belongs to the glycosyltransferase 4 family. MraY subfamily. The cofactor is Mg(2+).

The protein resides in the cell inner membrane. It catalyses the reaction UDP-N-acetyl-alpha-D-muramoyl-L-alanyl-gamma-D-glutamyl-meso-2,6-diaminopimeloyl-D-alanyl-D-alanine + di-trans,octa-cis-undecaprenyl phosphate = di-trans,octa-cis-undecaprenyl diphospho-N-acetyl-alpha-D-muramoyl-L-alanyl-D-glutamyl-meso-2,6-diaminopimeloyl-D-alanyl-D-alanine + UMP. The protein operates within cell wall biogenesis; peptidoglycan biosynthesis. In terms of biological role, catalyzes the initial step of the lipid cycle reactions in the biosynthesis of the cell wall peptidoglycan: transfers peptidoglycan precursor phospho-MurNAc-pentapeptide from UDP-MurNAc-pentapeptide onto the lipid carrier undecaprenyl phosphate, yielding undecaprenyl-pyrophosphoryl-MurNAc-pentapeptide, known as lipid I. This Shewanella violacea (strain JCM 10179 / CIP 106290 / LMG 19151 / DSS12) protein is Phospho-N-acetylmuramoyl-pentapeptide-transferase.